Here is a 425-residue protein sequence, read N- to C-terminus: Cell adhesion molecule CEACAM16 (425 aa).

The signal sequence occupies residues 1 to 20 (MALTGYSWLLLSATFLNVGA). N36 carries N-linked (GlcNAc...) asparagine glycosylation. Ig-like C2-type domains follow at residues 133 to 218 (PTVL…INLT) and 223 to 309 (PERV…ASVV). C153 and C201 are disulfide-bonded. N216 carries N-linked (GlcNAc...) asparagine glycosylation. C252 and C293 are joined by a disulfide. N394 carries N-linked (GlcNAc...) asparagine glycosylation.

Belongs to the immunoglobulin superfamily. CEA family. As to quaternary structure, homooligomer; can for homodimers and homotetramers. Interacts with TECTA and TECTB.

Its subcellular location is the secreted. In terms of biological role, required for proper hearing, plays a role in maintaining the integrity of the tectorial membrane. The polypeptide is Cell adhesion molecule CEACAM16 (Homo sapiens (Human)).